Reading from the N-terminus, the 226-residue chain is PKHD-type hydroxylase LHK_00496 (226 aa).

One can recognise a Fe2OG dioxygenase domain in the interval 78 to 178; sequence RFFPPLFNRY…RVASFMWIQS (101 aa). Fe cation-binding residues include His96, Asp98, and His159. Arg169 is a 2-oxoglutarate binding site.

It depends on Fe(2+) as a cofactor. The cofactor is L-ascorbate.

The protein is PKHD-type hydroxylase LHK_00496 of Laribacter hongkongensis (strain HLHK9).